We begin with the raw amino-acid sequence, 366 residues long: sn-glycerol-3-phosphate import ATP-binding protein UgpC (366 aa).

Residues 4 to 235 (LSLRNVQKTY…PASTFVAGFI (232 aa)) enclose the ABC transporter domain. Position 37-44 (37-44 (GPSGCGKS)) interacts with ATP.

It belongs to the ABC transporter superfamily. sn-glycerol-3-phosphate importer (TC 3.A.1.1.3) family. The complex is composed of two ATP-binding proteins (UgpC), two transmembrane proteins (UgpA and UgpE) and a solute-binding protein (UgpB).

The protein localises to the cell inner membrane. The enzyme catalyses sn-glycerol 3-phosphate(out) + ATP + H2O = sn-glycerol 3-phosphate(in) + ADP + phosphate + H(+). Part of the ABC transporter complex UgpBAEC involved in sn-glycerol-3-phosphate (G3P) import. Responsible for energy coupling to the transport system. This chain is sn-glycerol-3-phosphate import ATP-binding protein UgpC, found in Cupriavidus necator (strain ATCC 17699 / DSM 428 / KCTC 22496 / NCIMB 10442 / H16 / Stanier 337) (Ralstonia eutropha).